The primary structure comprises 144 residues: Succinate dehydrogenase cytochrome b560 subunit (144 aa).

The next 3 membrane-spanning stretches (helical) occupy residues 40 to 60, 84 to 104, and 124 to 144; these read IFHR…ILIL, GFLF…HLFA, and LTGY…WIIF. His101 contacts heme.

The protein belongs to the cytochrome b560 family. In terms of assembly, forms part of complex II containing four subunits: a 70 kDa flavoprotein (FP), a 27 kDa iron-sulfur protein (IP), a cytochrome B and a membrane-anchoring protein. It depends on heme as a cofactor.

The protein resides in the mitochondrion inner membrane. Its pathway is carbohydrate metabolism; tricarboxylic acid cycle. Membrane-anchoring subunit of succinate dehydrogenase (SDH) that is involved in complex II of the mitochondrial electron transport chain and is responsible for transferring electrons from succinate to ubiquinone (coenzyme Q). This chain is Succinate dehydrogenase cytochrome b560 subunit (SDH3), found in Reclinomonas americana.